The following is a 101-amino-acid chain: Interleukin-8 (101 aa).

An N-terminal signal peptide occupies residues 1–22 (MTSKLAVALLAAFLLSAALCEA). Citrulline is present on Arg27. 2 cysteine pairs are disulfide-bonded: Cys34–Cys61 and Cys36–Cys77.

This sequence belongs to the intercrine alpha (chemokine CxC) family. As to quaternary structure, homodimer. Interacts with TNFAIP6 (via Link domain); this interaction interferes with chemokine binding to glycosaminoglycans. Post-translationally, citrullination at Arg-27 prevents proteolysis, and dampens tissue inflammation, it also enhances leukocytosis, possibly through impaired chemokine clearance from the blood circulation.

The protein localises to the secreted. Functionally, chemotactic factor that mediates inflammatory response by attracting neutrophils, basophils, and T-cells to clear pathogens and protect the host from infection. Also plays an important role in neutrophil activation. Released in response to an inflammatory stimulus, exerts its effect by binding to the G-protein-coupled receptors CXCR1 and CXCR2, primarily found in neutrophils, monocytes and endothelial cells. G-protein heterotrimer (alpha, beta, gamma subunits) constitutively binds to CXCR1/CXCR2 receptor and activation by IL8 leads to beta and gamma subunits release from Galpha (GNAI2 in neutrophils) and activation of several downstream signaling pathways including PI3K and MAPK pathways. The sequence is that of Interleukin-8 (CXCL8) from Ovis aries (Sheep).